Reading from the N-terminus, the 872-residue chain is MESLLRFLALLLLRGAVAEGPAKKVLTLEGDLVLGGLFPVHQKGGPAEECGPVNEHRGIQRLEAMLFALDRINRDPHLLPGVRLGAHILDSCSKDTHALEQALDFVRASLSRGADGSRHICPDGSYATLSDAPTAITGVIGGSYSDVSIQVANLLRLFQIPQISYASTSAKLSDKSRYDYFARTVPPDFFQAKAMAEILRFFNWTYVSTVASEGDYGETGIEAFELEARARNICVATSEKVGRAMSRAAFEGVVRALLQKPSARVAVLFTRSEDARELLAATQRLNASFTWVASDGWGALESVVAGSERAAEGAITIELASYPISDFASYFQNLDPWNNSRNPWFREFWEERFRCSFRQRDCAAHSLRAVPFEQESKIMFVVNAVYAMAHALHNMHRALCPNTTRLCDAMRPVNGRRLYKDFVLNVKFDAPFRPADTDDEVRFDRFGDGIGRYNIFTYLRAGNGRYRYQKVGYWAEGLTLDTSIIPWASPSAGTLPASRCSEPCLQNEVKSVQPGEVCCWLCIPCQPYEYRLDEFTCADCGLGYWPNASLTGCFELPQEYIRWGDAWAVGPVTIACLGALATLFVLGVFVRHNATPVVKASGRELCYILLGGVFLCYCMTFIFIAKPSTAVCTLRRLGLGTAFSVCYSALLTKTNRIARIFGGAREGAQRPRFISPASQVAICLALISGQLLIVAAWLVVEAPGIGKETAPERREVVTLRCNHRDASMLGSLAYNVLLIALCTLYAFKTRKCPENFNEAKFIGFTMYTTCIIWLAFLPIFYVTSSDYRVQTTTMCVSVSLSGSVVLGCLFAPKLHIILFQPQKNVVSHRAPTSRFGSAAPRASANLGQGSGSQLVPTVCNGREVVDSTTSSL.

The signal sequence occupies residues 1-18 (MESLLRFLALLLLRGAVA). Residues 19-568 (EGPAKKVLTL…EYIRWGDAWA (550 aa)) lie on the Extracellular side of the membrane. Cys50 and Cys92 are disulfide-bonded. 5 residues coordinate L-glutamate: Arg57, Arg61, Ser145, Ala166, and Thr168. 2 N-linked (GlcNAc...) asparagine glycosylation sites follow: Asn203 and Asn286. Cystine bridges form between Cys234/Cys518, Cys355/Cys362, Cys400/Cys407, Cys500/Cys519, Cys504/Cys522, Cys525/Cys537, and Cys540/Cys553. An L-glutamate-binding site is contributed by Asp295. The N-linked (GlcNAc...) asparagine glycan is linked to Asn338. Residue Lys377 coordinates L-glutamate. Asn402 is a glycosylation site (N-linked (GlcNAc...) asparagine). N-linked (GlcNAc...) asparagine glycosylation occurs at Asn547. Residues 569-589 (VGPVTIACLGALATLFVLGVF) form a helical membrane-spanning segment. Residues 590 to 604 (VRHNATPVVKASGRE) are Cytoplasmic-facing. The chain crosses the membrane as a helical span at residues 605-625 (LCYILLGGVFLCYCMTFIFIA). The Extracellular segment spans residues 626–633 (KPSTAVCT). A disulfide bridge connects residues Cys632 and Cys721. A helical membrane pass occupies residues 634–651 (LRRLGLGTAFSVCYSALL). Over 652-679 (TKTNRIARIFGGAREGAQRPRFISPASQ) the chain is Cytoplasmic. Residues 677–685 (ASQVAICLA) form an important for interaction with HTR2A region. The helical transmembrane segment at 680–700 (VAICLALISGQLLIVAAWLVV) threads the bilayer. Topologically, residues 701-726 (EAPGIGKETAPERREVVTLRCNHRDA) are extracellular. Residues 727–747 (SMLGSLAYNVLLIALCTLYAF) form a helical membrane-spanning segment. The Cytoplasmic segment spans residues 748–760 (KTRKCPENFNEAK). A helical transmembrane segment spans residues 761–781 (FIGFTMYTTCIIWLAFLPIFY). At 782–798 (VTSSDYRVQTTTMCVSV) the chain is on the extracellular side. A helical membrane pass occupies residues 799-819 (SLSGSVVLGCLFAPKLHIILF). Topologically, residues 820-872 (QPQKNVVSHRAPTSRFGSAAPRASANLGQGSGSQLVPTVCNGREVVDSTTSSL) are cytoplasmic.

This sequence belongs to the G-protein coupled receptor 3 family. In terms of assembly, forms heterodimers with GRM3 or GRM4. Interacts with GNAI1. Interacts with TAMALIN. Interacts with HTR2A. As to expression, detected in neurons in brain cortex (at protein level).

It is found in the cell membrane. The protein localises to the synapse. Its subcellular location is the cell projection. The protein resides in the dendrite. Dimeric G protein-coupled receptor which is activated by the excitatory neurotransmitter L-glutamate. Plays critical roles in modulating synaptic transmission and neuronal excitability. Upon activation by glutamate, inhibits presynaptic calcium channels, reducing further glutamate release and dampening excitatory signaling. Mechanistically, ligand binding causes a conformation change that triggers signaling via guanine nucleotide-binding proteins (G proteins) and modulates the activity of down-stream effectors, such as adenylate cyclase. May mediate suppression of neurotransmission or may be involved in synaptogenesis or synaptic stabilization. The polypeptide is Metabotropic glutamate receptor 2 (Grm2) (Mus musculus (Mouse)).